The chain runs to 274 residues: Diaminopimelate epimerase (274 aa).

3 residues coordinate substrate: asparagine 11, glutamine 44, and asparagine 64. The Proton donor role is filled by cysteine 73. Residues 74–75, asparagine 157, asparagine 190, and 208–209 each bind substrate; these read GN and ER. The active-site Proton acceptor is cysteine 217. 218–219 is a substrate binding site; the sequence is GS.

This sequence belongs to the diaminopimelate epimerase family. Homodimer.

It is found in the cytoplasm. It carries out the reaction (2S,6S)-2,6-diaminopimelate = meso-2,6-diaminopimelate. The protein operates within amino-acid biosynthesis; L-lysine biosynthesis via DAP pathway; DL-2,6-diaminopimelate from LL-2,6-diaminopimelate: step 1/1. Its function is as follows. Catalyzes the stereoinversion of LL-2,6-diaminopimelate (L,L-DAP) to meso-diaminopimelate (meso-DAP), a precursor of L-lysine and an essential component of the bacterial peptidoglycan. The sequence is that of Diaminopimelate epimerase from Salmonella agona (strain SL483).